The primary structure comprises 280 residues: Borealin (280 aa).

Residues 1 to 58 (MAPRKGSSRVAKTNSLRRRKLASFLKDFDREVEIRIKQIESDRQNLLKEVDNLYNIEI) form a required for interaction with INCENP region. The tract at residues 1 to 88 (MAPRKGSSRV…NKQALEEAAT (88 aa)) is required for centromere localization. The required for interaction with SENP3 stretch occupies residues 1 to 140 (MAPRKGSSRV…ENERKNLQTA (140 aa)). The required to form a minimal CPC core complex that localizes to the central spindle and midbody and properly executes the role of the CPC during cytokinesis stretch occupies residues 10–109 (VAKTNSLRRR…TAEAIQTPLK (100 aa)). The segment at 20–78 (KLASFLKDFDREVEIRIKQIESDRQNLLKEVDNLYNIEILRLPKALREMNWLDYFALGG) is required for interaction with INCENP and BIRC5. Residues T88 and T94 each carry the phosphothreonine; by TTK modification. T106 is modified (phosphothreonine). S110 bears the Phosphoserine mark. Residues 130–169 (EENERKNLQTARVKRCPPSKKRTQSIQGKGKGKRSSRANT) form a disordered region. K135 participates in a covalent cross-link: Glycyl lysine isopeptide (Lys-Gly) (interchain with G-Cter in SUMO2). The span at 141–152 (RVKRCPPSKKRT) shows a compositional bias: basic residues. Residue S165 is modified to Phosphoserine; by AURKB. Position 169 is a phosphothreonine; by TTK (T169). Residues T189 and T204 each carry the phosphothreonine modification. Residues S219 and S224 each carry the phosphoserine modification. T230 bears the Phosphothreonine; by TTK mark. 2 positions are modified to phosphoserine: S238 and S244.

The protein belongs to the borealin family. In terms of assembly, may form homooligomers and homodimers. Component of the chromosomal passenger complex (CPC) composed of at least BIRC5/survivin, CDCA8/borealin, INCENP, AURKB or AURKC; in the complex forms a triple-helix bundle-based subcomplex with INCENP and BIRC5. Interacts with SENP3, UBE2I and RANBP2. Interacts (phosphorylated) with SGO1 and SGO2; the association is dependent on CDK1. In terms of processing, phosphorylated by TTK, essentially at Thr-88, Thr94, Thr-169 and Thr-230. Phosphorylation (probably by CDK1) promotes targeting of the CPC to centromeric DNA. Post-translationally, sumoylated by UBE2I and RANBP2. Desumoylated by SENP3 through the removal of SUMO2 and SUMO3.

Its subcellular location is the nucleus. It is found in the nucleolus. The protein resides in the cytoplasm. The protein localises to the chromosome. It localises to the centromere. Its subcellular location is the cytoskeleton. It is found in the spindle. Its function is as follows. Component of the chromosomal passenger complex (CPC), a complex that acts as a key regulator of mitosis. The CPC complex has essential functions at the centromere in ensuring correct chromosome alignment and segregation and is required for chromatin-induced microtubule stabilization and spindle assembly. In the complex, it may be required to direct the CPC to centromeric DNA. In Pongo abelii (Sumatran orangutan), this protein is Borealin (CDCA8).